The primary structure comprises 89 residues: Small ribosomal subunit protein uS15 (89 aa).

This sequence belongs to the universal ribosomal protein uS15 family. As to quaternary structure, part of the 30S ribosomal subunit. Forms a bridge to the 50S subunit in the 70S ribosome, contacting the 23S rRNA.

Its function is as follows. One of the primary rRNA binding proteins, it binds directly to 16S rRNA where it helps nucleate assembly of the platform of the 30S subunit by binding and bridging several RNA helices of the 16S rRNA. Functionally, forms an intersubunit bridge (bridge B4) with the 23S rRNA of the 50S subunit in the ribosome. This is Small ribosomal subunit protein uS15 from Agrobacterium fabrum (strain C58 / ATCC 33970) (Agrobacterium tumefaciens (strain C58)).